The chain runs to 371 residues: Protein cbbX homolog, chloroplastic (371 aa).

The N-terminal 54 residues, 1–54 (MIAFISNYITFKTNRTYKNNICQLHCQSLNDNDIEARKIKEEAERRKQQAERNR), are a transit peptide targeting the chloroplast. 137-144 (GAPGTGKT) serves as a coordination point for ATP.

Belongs to the CbxX/CfxQ family.

It is found in the plastid. The protein resides in the chloroplast. Seems to be necessary for the expression of RuBisCO. This Guillardia theta (Cryptophyte) protein is Protein cbbX homolog, chloroplastic (cbbX).